The chain runs to 332 residues: Glycerol-3-phosphate dehydrogenase [NAD(P)+] (332 aa).

Positions 13, 34, and 108 each coordinate NADPH. Residues Lys-108, Gly-136, and Ser-138 each contribute to the sn-glycerol 3-phosphate site. An NADPH-binding site is contributed by Ala-140. Residues Lys-191, Asp-244, Ser-254, Arg-255, and Asn-256 each contribute to the sn-glycerol 3-phosphate site. Lys-191 (proton acceptor) is an active-site residue. Arg-255 contacts NADPH. Residues Val-279 and Glu-281 each contribute to the NADPH site.

Belongs to the NAD-dependent glycerol-3-phosphate dehydrogenase family.

The protein resides in the cytoplasm. It catalyses the reaction sn-glycerol 3-phosphate + NAD(+) = dihydroxyacetone phosphate + NADH + H(+). It carries out the reaction sn-glycerol 3-phosphate + NADP(+) = dihydroxyacetone phosphate + NADPH + H(+). Its pathway is membrane lipid metabolism; glycerophospholipid metabolism. Its function is as follows. Catalyzes the reduction of the glycolytic intermediate dihydroxyacetone phosphate (DHAP) to sn-glycerol 3-phosphate (G3P), the key precursor for phospholipid synthesis. This Francisella tularensis subsp. tularensis (strain FSC 198) protein is Glycerol-3-phosphate dehydrogenase [NAD(P)+].